Reading from the N-terminus, the 370-residue chain is Allatostatins (370 aa).

A signal peptide spans 1–27; the sequence is MSGPRTCFCLPSALVLVLLSLSTSALG. Residues 28 to 65 constitute a propeptide that is removed on maturation; sequence TAPEPSGVHEESPAGGGTDLLPHPEDLSASDNPDLEFV. A disordered region spans residues 29–58; it reads APEPSGVHEESPAGGGTDLLPHPEDLSASD. Leucine amide is present on residues L73, L94, L105, and L117. The propeptide occupies 121 to 151; that stretch reads DYDYYGEEDEDDQQAIGDEDIEESDVGDLMD. Leucine amide is present on residues L161, L172, L188, L200, L213, and L232. Residues 236–251 constitute a propeptide that is removed on maturation; sequence SDDIDFRELEEKFAED. A Leucine amide modification is found at L264. A propeptide spanning residues 268–345 is cleaved from the precursor; the sequence is EVEPSELEAV…ITPEEFSRMV (78 aa). The disordered stretch occupies residues 273–298; it reads ELEAVRNEEKDNSSVHDKKNNTNDMH. L353 carries the post-translational modification Leucine amide. I364 is modified (isoleucine amide). Positions 368 to 370 are excised as a propeptide; the sequence is SER.

It belongs to the allatostatin family. Brain, subesophageal ganglion and corpus allatum.

It is found in the secreted. In terms of biological role, neuropeptide inhibitors of juvenile hormone synthesis and gut muscle contraction. This is Allatostatins from Diploptera punctata (Pacific beetle cockroach).